Consider the following 395-residue polypeptide: ATP phosphoribosyltransferase regulatory subunit (395 aa).

It belongs to the class-II aminoacyl-tRNA synthetase family. HisZ subfamily. In terms of assembly, heteromultimer composed of HisG and HisZ subunits.

The protein resides in the cytoplasm. It participates in amino-acid biosynthesis; L-histidine biosynthesis; L-histidine from 5-phospho-alpha-D-ribose 1-diphosphate: step 1/9. Functionally, required for the first step of histidine biosynthesis. May allow the feedback regulation of ATP phosphoribosyltransferase activity by histidine. This chain is ATP phosphoribosyltransferase regulatory subunit, found in Azotobacter vinelandii (strain DJ / ATCC BAA-1303).